We begin with the raw amino-acid sequence, 329 residues long: Minor capsid protein A1 (329 aa).

The interval 143 to 162 is disordered; that stretch reads GPSPVPGPNPDPPLEPPPGT. A compositionally biased stretch (pro residues) spans 145–161; sequence SPVPGPNPDPPLEPPPG.

It is found in the virion. Minor capsid protein. The protein is Minor capsid protein A1 of Qbeta virus (strain MX1).